Reading from the N-terminus, the 444-residue chain is ATP-dependent protease ATPase subunit HslU (444 aa).

ATP contacts are provided by residues valine 18, 60-65, aspartate 258, glutamate 323, and arginine 395; that span reads GVGKTE.

This sequence belongs to the ClpX chaperone family. HslU subfamily. As to quaternary structure, a double ring-shaped homohexamer of HslV is capped on each side by a ring-shaped HslU homohexamer. The assembly of the HslU/HslV complex is dependent on binding of ATP.

It localises to the cytoplasm. Functionally, ATPase subunit of a proteasome-like degradation complex; this subunit has chaperone activity. The binding of ATP and its subsequent hydrolysis by HslU are essential for unfolding of protein substrates subsequently hydrolyzed by HslV. HslU recognizes the N-terminal part of its protein substrates and unfolds these before they are guided to HslV for hydrolysis. The chain is ATP-dependent protease ATPase subunit HslU from Thioalkalivibrio sulfidiphilus (strain HL-EbGR7).